Consider the following 672-residue polypeptide: MNVLSSICYGGDYNPEQWPEEIWYEDAKLMQKAGVNLVSLGIFSWSKIEPSDGVFDFEWLDKVIDILYDHGVYINLGTATATTPAWFVKKYPDSLPIDESGVILSFGSRQHYCPNHPQLITHIKRLVRAIAERYKNHPALKMWHVNNEYACHVSKCFCENCAVAFRKWLKERYKTIDELNERWGTNFWGQRYNHWDEINPPRKAPTFINPSQELDYYRFMNDSILKLFLTEKEILREVTPDIPVSTNFMGSFKPLNYFQWAQHVDIVTWDSYPDPREGLPIQHAMMNDLMRSLRKGQPFILMEQVTSHVNWRDINVPKPPGVMRLWSYATIARGADGIMFFQWRQSRAGAEKFHGAMVPHFLNENNRIYREVTQLGQELKKLDCLVGSRIKAEVAIIFDWENWWAVELSSKPHNKLRYIPIVEAYYRELYKRNIAVDFVRPSDDLTKYKVVIAPMLYMVKEGEDENLRQFVANGGTLIVSFFSGIVDENDRVHLGGYPGPLRDILGIFVEEFVPYPETKVNKIYSNDGEYDCTTWADIIRLEGAEPLATFKGDWYAGLPAVTRNCYGKGEGIYVGTYPDSNYLGRLLEQVFAKHHINPILEVAENVEVQQRETDEWKYLIIINHNDYEVTLSLPEDKIYQNMIDGKCFRGGELRIQGVDVAVLREHDEAGKV.

Arg-109 is a substrate binding site. Position 113 (Cys-113) interacts with Zn(2+). Asn-147 contacts substrate. Glu-148 (proton donor) is an active-site residue. Residues Cys-156, Cys-158, and Cys-161 each coordinate Zn(2+). Catalysis depends on Glu-303, which acts as the Nucleophile. Residues Trp-311 and 351–354 (EKFH) contribute to the substrate site.

The protein belongs to the glycosyl hydrolase 42 family.

It carries out the reaction Hydrolysis of terminal non-reducing beta-D-galactose residues in beta-D-galactosides.. Its activity is regulated as follows. By divalent metal ions. Fe(2+), Zn(2+), Cu(2+), Pb(2+) and Sn(2+) inhibit 52, 76.6, 85.3, 100 and 100% of the enzyme activity, respectively. Other metal cations and EDTA do not inhibit this enzyme. Thiol reagents 2-mercaptoethanol and dithiothreitol have no effect on the activity. Sulfhydryl group-blocking reagents p-chloromercuribenzoic acid and iodoacetic acid inhibit 86.2 and 74% of the enzyme activity, respectively. Functionally, hydrolyzes 6-bromo-2-naphthyl-beta-D-galactopyranoside and o-nitrophenyl-beta-D-galactopyranoside (ONPG). Possesses a high level of transgalactosylation activity. Hydrolyzes lactose in milk. The sequence is that of Beta-galactosidase bgaB (bgaB) from Geobacillus kaustophilus.